The following is a 340-amino-acid chain: GTPase Obg (340 aa).

The 159-residue stretch at 1 to 159 folds into the Obg domain; the sequence is MRFIDKAKIH…RWIELELKLI (159 aa). Residues 160 to 331 form the OBG-type G domain; that stretch reads ADIGIIGFPN…LIKLIAEVYE (172 aa). GTP-binding positions include 166–173, 191–195, 213–216, 283–286, and 312–314; these read GFPNAGKS, FTTLT, DIPG, NKID, and SLV. Residues Ser-173 and Thr-193 each contribute to the Mg(2+) site.

It belongs to the TRAFAC class OBG-HflX-like GTPase superfamily. OBG GTPase family. Monomer. Mg(2+) is required as a cofactor.

The protein localises to the cytoplasm. Its function is as follows. An essential GTPase which binds GTP, GDP and possibly (p)ppGpp with moderate affinity, with high nucleotide exchange rates and a fairly low GTP hydrolysis rate. Plays a role in control of the cell cycle, stress response, ribosome biogenesis and in those bacteria that undergo differentiation, in morphogenesis control. In Persephonella marina (strain DSM 14350 / EX-H1), this protein is GTPase Obg.